The primary structure comprises 529 residues: T-complex protein 1 subunit delta (529 aa).

It belongs to the TCP-1 chaperonin family. In terms of assembly, heterooligomeric complex of about 850 to 900 kDa that forms two stacked rings, 12 to 16 nm in diameter.

The protein resides in the cytoplasm. In terms of biological role, molecular chaperone; assists the folding of proteins upon ATP hydrolysis. Known to play a role, in vitro, in the folding of actin and tubulin. The polypeptide is T-complex protein 1 subunit delta (CCT4) (Candida glabrata (strain ATCC 2001 / BCRC 20586 / JCM 3761 / NBRC 0622 / NRRL Y-65 / CBS 138) (Yeast)).